The primary structure comprises 133 residues: Small ribosomal subunit protein uS8 (133 aa).

The protein belongs to the universal ribosomal protein uS8 family. As to quaternary structure, part of the 30S ribosomal subunit. Contacts proteins S5 and S12.

One of the primary rRNA binding proteins, it binds directly to 16S rRNA central domain where it helps coordinate assembly of the platform of the 30S subunit. This Koribacter versatilis (strain Ellin345) protein is Small ribosomal subunit protein uS8.